The sequence spans 907 residues: MSLTRRFSLTLLLLLPLLTSLLAAIPVLQANLSPAPSSSPGPGVRILRAPESTVAPPGDEVVFVCETSLPPEYFEWSYASSRSHPPRFKYLKSSSAKANHNITITHNNDISKLRVIVRPETLGEYRCVAWFGPLAVTSTTARLEMASISGDGADTDQRAHWRVAAGNTVLWHCGQVASNPAPSWSFYYNDNEMPPASTLSDSNGTLLLPHVSAASSGSYSCVATNTASGVRLALPSRLELQVPAAALASTAPALLNGQRVRTQVFAKAGETVLLLCPGVGYPPPTAVWSSPNVPGAVYNNRTRVLPYGLQISALQPLDAGTYICYLDNGIRPALEHFIELVVQKSPRILRPPTANLTNEGERMQLECEATGMPKPEIYWLLNGESSVYDVEAEQVPNGHLILHSVQKRHAGYVQCFARNSLGEHSAGTLLQVNPKQLPDGEGTGMDSGRSSARPTHSRKQKQQTQMVPPSAPNVTRLSDESVMLRWHVVRNDGLPIQFFKVQYRMLTESGKRKSWQTTNENIPYGRQRHESGAGVRNFTSSVTGLKPNSSYRFRIMAVYSNNDNKESNTSGKFFLQRGAALAPLAVPELVDIEEYSQTAVVLHWRLSSDADEQLISGYYAYYRPSASAGEYLKATIDGAKSRSFQISALEPGTIYEFKLQSFSAVAASEFSALKQGRTQRPRASSTPQPVLHAVDTTTPSHNETFNMNPMLTGTIGGGALLVLLVISACLCLCRRRSSRGNNPQHKPRLAELREDFVPLNTCSPNKPRTRHIHITLNPLAQQQQQQQQQQLQQQQHDEKEAQDNDMGYFQRQPVVYDAETLGFNGLARMSSSSLRRSQRTLERAAAGGGSGGNNNNLNQPGDGSLANSADSPRLQASNKPGRVILKRARLSSRSENLSSGSLNSVGV.

The N-terminal stretch at M1–A23 is a signal peptide. At A24–P709 the chain is on the extracellular side. Ig-like C2-type domains are found at residues P42–S149, G152–A233, P252–L340, and P346–N433. 3 cysteine pairs are disulfide-bonded: C65/C127, C173/C221, and C276/C324. N-linked (GlcNAc...) asparagine glycans are attached at residues N101, N203, N300, and N355. Cysteines 367 and 415 form a disulfide. The segment at G427 to V474 is disordered. Polar residues predominate over residues Q462 to V474. 2 Fibronectin type-III domains span residues P468 to G578 and V586 to P681. N-linked (GlcNAc...) asparagine glycosylation is present at N473. Residues R504, K511, and K513 each coordinate heparin. Residues N537 and N548 are each glycosylated (N-linked (GlcNAc...) asparagine). Position 552 (R552) interacts with heparin. Residue N568 is glycosylated (N-linked (GlcNAc...) asparagine). Residues G676 to Q688 are compositionally biased toward polar residues. The tract at residues G676 to H701 is disordered. N702 carries an N-linked (GlcNAc...) asparagine glycan. The helical transmembrane segment at M710–L730 threads the bilayer. Residues C731–V907 lie on the Cytoplasmic side of the membrane. 2 disordered regions span residues A780–D805 and M829–G881. 2 stretches are compositionally biased toward low complexity: residues Q781–Q794 and N853–G863. Positions L865–N878 are enriched in polar residues.

It belongs to the immunoglobulin superfamily. IHOG family. In terms of assembly, homodimer. Heterotetramer; 2 iHog chains bind 2 hh chains when facilitated by heparin, heparin is required to promote high-affinity interactions between hh and iHog.

The protein resides in the membrane. Mediates response to the active Hedgehog (Hh) protein signal in embryos, functioning upstream or at the level of patched (ptc). This is Interference hedgehog from Drosophila virilis (Fruit fly).